Reading from the N-terminus, the 762-residue chain is cGMP-dependent protein kinase 2 (762 aa).

The interval 1–25 (MGNGSVKPKHSKHPDGQSGNLSNEA) is disordered. The N-myristoyl glycine moiety is linked to residue glycine 2. Residues serine 110 and serine 117 each carry the phosphoserine modification. The interval 112–138 (LVSLHSRRGAKAGVSAEPTSRTYDLNK) is disordered. Positions 168 to 283 (FLKRLDPQQI…DEEYRNFLRS (116 aa)) are cGMP-binding, high affinity; cAMP-binding, moderate affinity. 3',5'-cyclic GMP-binding positions include 232–235 (GELA), 242–243 (RT), lysine 347, 356–359 (GEKA), 366–367 (RS), aspartate 412, and arginine 415. The segment at 286–416 (LLKNLPEDKL…TLNRDDEKRH (131 aa)) is cGMP-binding, high affinity; cAMP-binding, low affinity. Serine 431 is modified (phosphoserine). In terms of domain architecture, Protein kinase spans 453 to 711 (LEIIATLGVG…INDIKKHRWL (259 aa)). ATP is bound by residues 459–467 (LGVGGFGRV) and lysine 482. The active-site Proton acceptor is the aspartate 576. At threonine 609 the chain carries Phosphothreonine. Residues 712–762 (NGFNWEGLKARSLPSPLRRELSGPIDHSYFDKYPPEKGVPPDEMSGWDKDF) enclose the AGC-kinase C-terminal domain. The interval 740–762 (YFDKYPPEKGVPPDEMSGWDKDF) is disordered.

Belongs to the protein kinase superfamily. AGC Ser/Thr protein kinase family. cGMP subfamily. In terms of assembly, interacts with GRIA1/GLUR1. Post-translationally, myristoylation mediates membrane localization. In terms of tissue distribution, highly expressed in intestinal mucosa and is 20 times less abundant in brain and kidney. Expressed in jejunum, in the apical domain of the villus epithelium.

The protein localises to the apical cell membrane. It localises to the cell membrane. It catalyses the reaction L-seryl-[protein] + ATP = O-phospho-L-seryl-[protein] + ADP + H(+). The enzyme catalyses L-threonyl-[protein] + ATP = O-phospho-L-threonyl-[protein] + ADP + H(+). Binding of cGMP results in enzyme activation. Functionally, crucial regulator of intestinal secretion and bone growth. Phosphorylates and activates CFTR on the plasma membrane. Plays a key role in intestinal secretion by regulating cGMP-dependent translocation of CFTR in jejunum. Acts downstream of NMDAR to activate the plasma membrane accumulation of GRIA1/GLUR1 in synapse and increase synaptic plasticity. Phosphorylates GRIA1/GLUR1 at Ser-863. Acts as regulator of gene expression and activator of the extracellular signal-regulated kinases MAPK3/ERK1 and MAPK1/ERK2 in mechanically stimulated osteoblasts. Under fluid shear stress, mediates ERK activation and subsequent induction of FOS, FOSL1/FRA1, FOSL2/FRA2 and FOSB that play a key role in the osteoblast anabolic response to mechanical stimulation. The chain is cGMP-dependent protein kinase 2 (Prkg2) from Rattus norvegicus (Rat).